Consider the following 492-residue polypeptide: ATP synthase subunit beta, plastid (492 aa).

Residue 170–177 (GGAGVGKT) coordinates ATP.

This sequence belongs to the ATPase alpha/beta chains family. As to quaternary structure, F-type ATPases have 2 components, CF(1) - the catalytic core - and CF(0) - the membrane proton channel. CF(1) has five subunits: alpha(3), beta(3), gamma(1), delta(1), epsilon(1). CF(0) has four main subunits: a(1), b(1), b'(1) and c(9-12).

The protein resides in the plastid membrane. The enzyme catalyses ATP + H2O + 4 H(+)(in) = ADP + phosphate + 5 H(+)(out). Produces ATP from ADP in the presence of a proton gradient across the membrane. The catalytic sites are hosted primarily by the beta subunits. The sequence is that of ATP synthase subunit beta, plastid from Aneura mirabilis (Parasitic liverwort).